Consider the following 22-residue polypeptide: FVPFFTQSDIQKMQEKERNKGQ.

The segment covering 1-11 has biased composition (polar residues); the sequence is FVPFFTQSDIQ. The segment at 1–22 is disordered; that stretch reads FVPFFTQSDIQKMQEKERNKGQ. The segment covering 12-22 has biased composition (basic and acidic residues); that stretch reads KMQEKERNKGQ.

It belongs to the motilin family.

It localises to the secreted. Its function is as follows. Plays an important role in the regulation of interdigestive gastrointestinal motility and indirectly causes rhythmic contraction of duodenal and colonic smooth muscle. This chain is Motilin (MLN), found in Gallus gallus (Chicken).